Consider the following 627-residue polypeptide: Pescadillo homolog (627 aa).

The region spanning 321 to 414 (RLRTLFKGLK…QLLPTNKYFI (94 aa)) is the BRCT domain. Disordered stretches follow at residues 450-469 (HAQS…ETVD), 488-566 (YKKY…MVKP), and 595-627 (TIEA…KLGK). 2 positions are modified to phosphoserine: S453 and S457. Composition is skewed to acidic residues over residues 454–469 (DDDS…ETVD) and 497–521 (VNED…EELD). Over residues 522 to 533 (EKTKRLQEEKQK) the composition is skewed to basic and acidic residues. The segment covering 540–549 (KVHKVNKRQV) has biased composition (basic residues). Composition is skewed to basic and acidic residues over residues 550 to 559 (HKAEVDEHRL) and 595 to 615 (TIEA…RKEA). The stretch at 582–625 (KEKEEWLLRKKRRTIEASEKEARKTAKREARKEAAAAAAKASKL) forms a coiled coil. Low complexity predominate over residues 616-627 (AAAAAKASKLGK).

It belongs to the pescadillo family.

The protein resides in the nucleus. Its subcellular location is the nucleolus. The protein localises to the nucleoplasm. Functionally, required for maturation of ribosomal RNAs and formation of the large ribosomal subunit. This is Pescadillo homolog from Drosophila simulans (Fruit fly).